The following is a 439-amino-acid chain: Xylose isomerase (439 aa).

Residues His-103 and Asp-106 contribute to the active site. Mg(2+) is bound by residues Glu-234, Glu-270, His-273, Asp-298, Asp-309, Asp-311, and Asp-341.

The protein belongs to the xylose isomerase family. As to quaternary structure, homotetramer. Requires Mg(2+) as cofactor.

The protein resides in the cytoplasm. It carries out the reaction alpha-D-xylose = alpha-D-xylulofuranose. The sequence is that of Xylose isomerase from Bacteroides fragilis (strain ATCC 25285 / DSM 2151 / CCUG 4856 / JCM 11019 / LMG 10263 / NCTC 9343 / Onslow / VPI 2553 / EN-2).